Reading from the N-terminus, the 164-residue chain is Putative pre-16S rRNA nuclease (164 aa).

This sequence belongs to the YqgF nuclease family.

It localises to the cytoplasm. Functionally, could be a nuclease involved in processing of the 5'-end of pre-16S rRNA. The protein is Putative pre-16S rRNA nuclease of Synechococcus sp. (strain CC9902).